We begin with the raw amino-acid sequence, 470 residues long: Glutamate--tRNA ligase 2 (470 aa).

A 'HIGH' region motif is present at residues 11-21; the sequence is PSPTGHLHLGG. Residues 238 to 242 carry the 'KMSKS' region motif; that stretch reads KLSKR. Residue Lys-241 coordinates ATP.

Belongs to the class-I aminoacyl-tRNA synthetase family. Glutamate--tRNA ligase type 1 subfamily. Monomer.

It is found in the cytoplasm. It carries out the reaction tRNA(Glu) + L-glutamate + ATP = L-glutamyl-tRNA(Glu) + AMP + diphosphate. In terms of biological role, catalyzes the attachment of glutamate to tRNA(Glu) in a two-step reaction: glutamate is first activated by ATP to form Glu-AMP and then transferred to the acceptor end of tRNA(Glu). The polypeptide is Glutamate--tRNA ligase 2 (Ehrlichia ruminantium (strain Gardel)).